Here is a 166-residue protein sequence, read N- to C-terminus: Coiled-coil domain-containing protein 12 (166 aa).

At methionine 1 the chain carries N-acetylmethionine. The stretch at 8–28 forms a coiled coil; it reads VGRLEEEALRRKERLKALREK. Over residues 21–53 the composition is skewed to basic and acidic residues; that stretch reads RLKALREKTGRKDREDGEPQTKQLREEGEEVGK. Residues 21–55 form a disordered region; that stretch reads RLKALREKTGRKDREDGEPQTKQLREEGEEVGKHR. Lysine 53 bears the N6-acetyllysine mark. A Glycyl lysine isopeptide (Lys-Gly) (interchain with G-Cter in SUMO2) cross-link involves residue lysine 94. Residues 115–144 are a coiled coil; it reads DLKRDVAKKLEKLEKRTQRAIAELIRERLK. Residues 146–166 are disordered; the sequence is QEDSLASAVDATTGQEACDSD. Phosphoserine occurs at positions 149 and 165.

This chain is Coiled-coil domain-containing protein 12 (Ccdc12), found in Mus musculus (Mouse).